Reading from the N-terminus, the 648-residue chain is MNNTKKDQYSSQSIKVLEGLSAVRKRPGMYIGSTDQKGLHHMIWEIIDNSVDEMMAGYGTTVKLTLKDNYLVEVEDDGRGIPVDIHEKTNKSTVETVLTILHAGGKFDSDTYSMSGGLHGVGASVVNALSSSFKVWVNRDYKIHYIEFKDGGVPLKPLEIIGTDSKKQGTRIQFVPDFSIMEQFEYDETIIADRIEQLAFLNKGIKFIFNDERTDKKTKQEWLYEGGIKQYVENLNASKEPIIPQIIYGEKKTKVTLPKRNLEVTMLLEVAFQYTNGYYNSTYSFCNNIHTNQGGTHEEGFKNALYKIINRYALEKKFIKETDGKISKEDLSEGLTAIISIKHSEPQYQGQTKDRLGNTEVREFTNSVVSELLERFFLENPEEAAKITAKAVSAMFSRKRSEAALESARKSPFESASLPGKLADCTTKDMEISELYIVEGDSAGGSAKSGRDRFYQAILPLRGKVLNVEKANHEKIFKNEEIRTLITAIGAGVNPEFSLDKIRYNKIIIMTDADVDGAHIRILLLTFFFRHMFPLIEKGHVYIAQPPLYRVSYNKQNKYIYSDAQLEEWKNQNPNVRYELQRYKGLGEMDDVQLWETTMDPEKRTLLKVSINDAANADKTFSLLMGDEVSPRRDFIEKNAKSVKNIDF.

A Toprim domain is found at 433-547 (SELYIVEGDS…KGHVYIAQPP (115 aa)). Positions 439, 512, and 514 each coordinate Mg(2+).

This sequence belongs to the type II topoisomerase GyrB family. In terms of assembly, heterotetramer, composed of two GyrA and two GyrB chains. In the heterotetramer, GyrA contains the active site tyrosine that forms a transient covalent intermediate with DNA, while GyrB binds cofactors and catalyzes ATP hydrolysis. Mg(2+) serves as cofactor. Requires Mn(2+) as cofactor. Ca(2+) is required as a cofactor.

It is found in the cytoplasm. It carries out the reaction ATP-dependent breakage, passage and rejoining of double-stranded DNA.. In terms of biological role, a type II topoisomerase that negatively supercoils closed circular double-stranded (ds) DNA in an ATP-dependent manner to modulate DNA topology and maintain chromosomes in an underwound state. Negative supercoiling favors strand separation, and DNA replication, transcription, recombination and repair, all of which involve strand separation. Also able to catalyze the interconversion of other topological isomers of dsDNA rings, including catenanes and knotted rings. Type II topoisomerases break and join 2 DNA strands simultaneously in an ATP-dependent manner. The sequence is that of DNA gyrase subunit B from Mycoplasmoides gallisepticum (strain R(low / passage 15 / clone 2)) (Mycoplasma gallisepticum).